Consider the following 911-residue polypeptide: Inositol 1,4,5-triphosphate receptor associated 1 (911 aa).

Positions 1–11 are enriched in basic and acidic residues; it reads MVKAPQSEERL. Disordered regions lie at residues 1–21, 39–122, 174–405, and 478–498; these read MVKA…NNSV, EVPG…HRHL, LTRR…GPRL, and EQEK…ESKG. The span at 68-86 shows a compositional bias: polar residues; sequence AAQSPAGQDPATTGISCSP. The span at 111 to 122 shows a compositional bias: basic residues; it reads HSPHRRLSHRHL. Ser-118 carries the phosphoserine modification. The interval 152-184 is interaction with PRKG1; that stretch reads SEEDKKKNLALLEEAKLVSERFLTRRGRKSRSS. The segment covering 183–212 has biased composition (polar residues); the sequence is SSPGESSPAVSPNLSPGASPASSQSNSLTV. Residues 277-292 are compositionally biased toward basic and acidic residues; it reads TVEKSKEITIEQKENF. Residue Ser-393 is modified to Phosphoserine. The tract at residues 534 to 580 is interaction with ITPR1; it reads NVFVQLSLAFRNDSYTLESRINQAERERNLTEENTEKELENFKASIT. A coiled-coil region spans residues 547–645; it reads SYTLESRINQ…MQYVENLKRT (99 aa). A phosphoserine mark is found at Ser-683 and Ser-696. 2 disordered regions span residues 706 to 766 and 787 to 829; these read LNLP…TPSC and YQEG…KEQR. Residues 708–728 show a composition bias toward low complexity; the sequence is LPGQSPSSSPIPSLPALSESS. Residues 790–801 are compositionally biased toward basic and acidic residues; sequence GLKKTKELQGLR. Positions 802–825 are enriched in acidic residues; it reads EEEEEQKSESPEEPEEVAETEEEE. Residues 853–873 form a helical membrane-spanning segment; that stretch reads VIWMMAAAMLVLTVVLGLYGS.

In terms of assembly, interacts with PRKG1/cGKI-beta and ITPR1/IP3R type I. Part of cGMP kinase signaling complex at least composed of ACTA2/alpha-actin, CNN1/calponin H1, PLN/phospholamban, PRKG1 and ITPR1. Interacts with HCN4; regulates HCN4 channel activity. Post-translationally, phosphorylated by PRKG1/cGKI-beta. Phosphorylation at Ser-696 is necessary for PRKG1-induced calcium release in the cytosol. Highly expressed in trachea, aorta and uterus.

It localises to the sarcoplasmic reticulum. The protein localises to the cytoplasm. The protein resides in the perinuclear region. It is found in the membrane. Its function is as follows. Plays a role as NO/PRKG1-dependent regulator of IP3-induced calcium release; its phosphorylation by PRKG1 inhibits bradykinin and IP3-induced calcium release from intracellular stores. Recruits PRKG1 to the endoplasmic reticulum and may mediate the assembly of PRKG1 and ITPR1 in a macrocomplex. Involved in PRKG1 signaling cascade leading to inhibition of platelet activation and aggregation. Also mediates NO-dependent inhibition of calcium signaling in gastrointestinal smooth muscle contributing to NO-dependent relaxation. Plays a role in the regulation of cellular excitability by regulating the hyperpolarization-activated cyclic nucleotide-gated HCN4 channel activity. This chain is Inositol 1,4,5-triphosphate receptor associated 1 (IRAG1), found in Bos taurus (Bovine).